Consider the following 342-residue polypeptide: Galactose mutarotase (342 aa).

An N-acetylalanine modification is found at A2. Position 14 is a phosphoserine (S14). Beta-D-galactose contacts are provided by residues 81–82 (NR) and H107. A Phosphoserine modification is found at S124. H176 serves as the catalytic Proton donor. Residues 176 to 178 (HSY), D243, Q279, and E307 contribute to the beta-D-galactose site. The Proton acceptor role is filled by E307.

The protein belongs to the aldose epimerase family. In terms of assembly, monomer.

The protein resides in the cytoplasm. The catalysed reaction is alpha-D-galactose = beta-D-galactose. It catalyses the reaction alpha-D-glucose = beta-D-glucose. Its pathway is carbohydrate metabolism; hexose metabolism. It functions in the pathway carbohydrate metabolism; galactose metabolism. Its function is as follows. Mutarotase that catalyzes the interconversion of beta-D-galactose and alpha-D-galactose during galactose metabolism. Beta-D-galactose is metabolized in the liver into glucose 1-phosphate, the primary metabolic fuel, by the action of four enzymes that constitute the Leloir pathway: GALM, GALK1 (galactokinase), GALT (galactose-1-phosphate uridylyltransferase) and GALE (UDP-galactose-4'-epimerase). Involved in the maintenance of the equilibrium between the beta- and alpha-anomers of galactose, therefore ensuring a sufficient supply of the alpha-anomer for GALK1. Also active on D-glucose although shows a preference for galactose over glucose. The chain is Galactose mutarotase (GALM) from Pongo abelii (Sumatran orangutan).